We begin with the raw amino-acid sequence, 297 residues long: Tyrosine recombinase XerD (297 aa).

Positions 1–86 constitute a Core-binding (CB) domain; the sequence is MKNLALIDLF…AMRKLFQYLY (86 aa). One can recognise a Tyr recombinase domain in the interval 107–291; the sequence is RLPKYLTEQQ…AKERLKRLHE (185 aa). Catalysis depends on residues Arg147, Lys171, His243, Arg246, and His269. Catalysis depends on Tyr278, which acts as the O-(3'-phospho-DNA)-tyrosine intermediate.

This sequence belongs to the 'phage' integrase family. XerD subfamily. Forms a cyclic heterotetrameric complex composed of two molecules of XerC and two molecules of XerD.

It localises to the cytoplasm. Its function is as follows. Site-specific tyrosine recombinase, which acts by catalyzing the cutting and rejoining of the recombining DNA molecules. The XerC-XerD complex is essential to convert dimers of the bacterial chromosome into monomers to permit their segregation at cell division. It also contributes to the segregational stability of plasmids. The protein is Tyrosine recombinase XerD of Haemophilus influenzae (strain ATCC 51907 / DSM 11121 / KW20 / Rd).